Consider the following 92-residue polypeptide: Small ribosomal subunit protein uS19 (92 aa).

The protein belongs to the universal ribosomal protein uS19 family.

Its function is as follows. Protein S19 forms a complex with S13 that binds strongly to the 16S ribosomal RNA. This Oceanobacillus iheyensis (strain DSM 14371 / CIP 107618 / JCM 11309 / KCTC 3954 / HTE831) protein is Small ribosomal subunit protein uS19.